The primary structure comprises 297 residues: Calponin-1 (297 aa).

In terms of domain architecture, Calponin-homology (CH) spans H28 to A131. Phosphoserine is present on S48. 3 Calponin-like repeats span residues I164–Y189, I204–F229, and V243–Y268. T170 is modified (phosphothreonine; by ROCK2). At S175 the chain carries Phosphoserine; by ROCK2. Phosphothreonine; by ROCK2 is present on residues T180 and T184. T259 carries the phosphothreonine; by ROCK2 modification.

Belongs to the calponin family. Part of cGMP kinase signaling complex at least composed of ACTA2/alpha-actin, CNN1/calponin H1, PLN/phospholamban, PRKG1 and ITPR1. Smooth muscle, and tissues containing significant amounts of smooth muscle.

Functionally, thin filament-associated protein that is implicated in the regulation and modulation of smooth muscle contraction. It is capable of binding to actin, calmodulin and tropomyosin. The interaction of calponin with actin inhibits the actomyosin Mg-ATPase activity. The protein is Calponin-1 (Cnn1) of Rattus norvegicus (Rat).